Reading from the N-terminus, the 481-residue chain is Dynein axonemal assembly factor 8 (481 aa).

Disordered stretches follow at residues 70–91 (DESGTWVTAGRSPSPEPLLVPG), 131–233 (LDTK…EGRP), 306–397 (TWKV…PVAS), and 415–454 (RAFRKGAVPPQLSAKDGPGGQKDQAQEDTGGSQTQRKKHI). 3 positions are modified to phosphoserine: serine 83, serine 145, and serine 147. A compositionally biased stretch (polar residues) spans 144–155 (GSQSPPWSSQGE). The span at 163-176 (GKLKTEPSDTDFKN) shows a compositional bias: basic and acidic residues. Residues 177 to 188 (SAKRRALRRERR) show a composition bias toward basic residues. Positions 198–211 (KVTQAAQNPASGDQ) are enriched in polar residues. Over residues 310–322 (SADKLQDTEEQVA) the composition is skewed to basic and acidic residues. Polar residues predominate over residues 323 to 336 (RTRSASAESGFQTE). Serine 328 is subject to Phosphoserine. 2 stretches are compositionally biased toward basic and acidic residues: residues 337–349 (RVQKRAESRRLKT) and 359–380 (RLTEPSDPQEHQSQESSEHSSS).

The protein resides in the dynein axonemal particle. It localises to the cytoplasm. In terms of biological role, in cyliated cells, dynein axonemal particle-specific protein required for deployment of ODA to the axoneme. Interacts with outer dynein arm (ODA) subunits. The sequence is that of Dynein axonemal assembly factor 8 (Dnaaf8) from Rattus norvegicus (Rat).